Here is a 224-residue protein sequence, read N- to C-terminus: Orotidine 5'-phosphate decarboxylase (224 aa).

Substrate is bound by residues Asp-10, Lys-32, 59 to 68 (DLKLHDIPNT), Thr-115, Arg-175, Gln-184, Gly-204, and Arg-205. The active-site Proton donor is Lys-61.

The protein belongs to the OMP decarboxylase family. Type 1 subfamily. Homodimer.

The catalysed reaction is orotidine 5'-phosphate + H(+) = UMP + CO2. It participates in pyrimidine metabolism; UMP biosynthesis via de novo pathway; UMP from orotate: step 2/2. Its function is as follows. Catalyzes the decarboxylation of orotidine 5'-monophosphate (OMP) to uridine 5'-monophosphate (UMP). The chain is Orotidine 5'-phosphate decarboxylase from Erythrobacter litoralis (strain HTCC2594).